The following is a 1183-amino-acid chain: DNA-directed RNA polymerase subunit beta (1183 aa).

Over residues 1151-1162 (EIEMADVDDEDA) the composition is skewed to acidic residues. Residues 1151–1183 (EIEMADVDDEDAAERKVDLQQKSAPESQKETTD) form a disordered region.

This sequence belongs to the RNA polymerase beta chain family. As to quaternary structure, the RNAP catalytic core consists of 2 alpha, 1 beta, 1 beta' and 1 omega subunit. When a sigma factor is associated with the core the holoenzyme is formed, which can initiate transcription.

It catalyses the reaction RNA(n) + a ribonucleoside 5'-triphosphate = RNA(n+1) + diphosphate. Functionally, DNA-dependent RNA polymerase catalyzes the transcription of DNA into RNA using the four ribonucleoside triphosphates as substrates. The sequence is that of DNA-directed RNA polymerase subunit beta from Staphylococcus epidermidis (strain ATCC 12228 / FDA PCI 1200).